The sequence spans 541 residues: Beta-hexosaminidase 1 (541 aa).

The signal sequence occupies residues 1 to 20; that stretch reads MSTNLLRLILLFITLSITSS. Residues Asn-44 and Asn-304 are each glycosylated (N-linked (GlcNAc...) asparagine). A disulfide bridge links Cys-295 with Cys-337. Glu-332 acts as the Proton donor in catalysis. Asn-340, Asn-352, and Asn-497 each carry an N-linked (GlcNAc...) asparagine glycan. A disulfide bridge links Cys-511 with Cys-538.

This sequence belongs to the glycosyl hydrolase 20 family. Post-translationally, N-glycosylated. Expressed in roots, leaves, stems, flowers and siliques.

It localises to the vacuole. It carries out the reaction Hydrolysis of terminal non-reducing N-acetyl-D-hexosamine residues in N-acetyl-beta-D-hexosaminides.. Its activity is regulated as follows. Inhibited by N-acetylcastanospermine, 2-acet-amido-1,2-dideoxynojirimycin and PUGNAc. Its function is as follows. Has a broad substrate specificity. Can use synthetic substrates such as pyridylaminated chitotriose, pyridylaminated chitobiose, p-nitrophenyl-beta-N-acetylglucosaminide, p-nitrophenyl-2-acetamido-2-deoxy-beta-D-glucopyranoside (pNP-GlcNAc), p-nitrophenyl-2-acetamido-2-deoxy-beta-D-galactopyranoside (pNP-GalNAc), 4-methylumbelliferyl-2-acetamido-2-deoxy-beta-D-glucopyranoside (MU-GlcNAc), and 4-methylumbelliferyl-6-sulfo-2-acetamido-2-deoxy-beta-D-glucopyranoside (MU-GlcNAc-6SO(4)) as substrates. Removes terminal GlcNAc residues from alpha1,3- and alpha1,6-mannosyl branches of biantennary N-glycans without any strict branch preference. Required for the presence of paucimannosidic N-glycans in glycoproteins of roots and, to a lower extent, of leaves. This is Beta-hexosaminidase 1 (HEXO1) from Arabidopsis thaliana (Mouse-ear cress).